Reading from the N-terminus, the 505-residue chain is Midnolin (505 aa).

One can recognise a Ubiquitin-like domain in the interval 32–106; sequence MSLAIHSTTG…LTLVPTVEAG (75 aa). Disordered stretches follow at residues 155–176, 228–305, and 440–485; these read PWHR…VSDF, SIAT…SRKP, and RLRR…GLDF. A compositionally biased stretch (low complexity) spans 238-262; it reads RPVSSAARVPPVSSSPSSPVSPSPV. The segment covering 263 to 282 has biased composition (polar residues); the sequence is TAGTFQSHAASTTCPEQTDC. Low complexity predominate over residues 283–300; it reads SPPASSNTTSTPGSSPTP.

As to quaternary structure, interacts with GCK; the interaction occurs preferentially at low glucose levels. Interacts with the proteasome.

It localises to the nucleus. It is found in the cytoplasm. The protein localises to the cytosol. The protein resides in the nucleolus. Its function is as follows. Facilitates the ubiquitin-independent proteasomal degradation of stimulus-induced transcription factors such as FOSB, EGR1, NR4A1, and IRF4 to the proteasome for degradation. Promotes also the degradation of other substrates such as CBX4. Plays a role in inhibiting the activity of glucokinase GCK and both glucose-induced and basal insulin secretion. In Rattus norvegicus (Rat), this protein is Midnolin.